The chain runs to 380 residues: Cytochrome b (380 aa).

4 helical membrane passes run 34-54, 78-99, 114-134, and 179-199; these read FGSLLGVCLLTQILTGLLLAM, WLIRNLHANGASFFFICIYLHI, WNTGVILLLTLMATAFVGYVL, and FFALHFLLPFMIAGLTLIHLT. Residues H84 and H98 each coordinate heme b. Residues H183 and H197 each coordinate heme b. An a ubiquinone-binding site is contributed by H202. Helical transmembrane passes span 227 to 247, 289 to 309, 321 to 341, and 348 to 368; these read LKDILGFMLMFLPLTTLALFS, LGGVLALAASVLVLFLAPFLH, LSQLLFWILVANLFILTWVGS, and FIIIGQLASLTYFTILLILFP.

It belongs to the cytochrome b family. As to quaternary structure, the cytochrome bc1 complex contains 11 subunits: 3 respiratory subunits (MT-CYB, CYC1 and UQCRFS1), 2 core proteins (UQCRC1 and UQCRC2) and 6 low-molecular weight proteins (UQCRH/QCR6, UQCRB/QCR7, UQCRQ/QCR8, UQCR10/QCR9, UQCR11/QCR10 and a cleavage product of UQCRFS1). This cytochrome bc1 complex then forms a dimer. The cofactor is heme b.

The protein resides in the mitochondrion inner membrane. Its function is as follows. Component of the ubiquinol-cytochrome c reductase complex (complex III or cytochrome b-c1 complex) that is part of the mitochondrial respiratory chain. The b-c1 complex mediates electron transfer from ubiquinol to cytochrome c. Contributes to the generation of a proton gradient across the mitochondrial membrane that is then used for ATP synthesis. In Calonectris leucomelas (Streaked shearwater), this protein is Cytochrome b (MT-CYB).